We begin with the raw amino-acid sequence, 223 residues long: MSGQILWGIMPYIVLTIFIGGHIYRYQHDQFGWTAKSSELLEKKKLAAGSTLFHWGLLCVVGGHVMGILIPEGVYASLGISEHMYHKMAIGAGLPAGIAACTGLVILTYRRLFDKRIRKTSSPSDILTLLLLLFMMLSGVAATFLNIDSKGFDYRTTVGPWFREIVLFRPDASLMESVPLWFKFHIVIGYVVFILWPFTRLVHVFSLPLKYLTRSYVVYRKRS.

A helical membrane pass occupies residues 2–27 (SGQILWGIMPYIVLTIFIGGHIYRYQ). The Cytoplasmic segment spans residues 28 to 45 (HDQFGWTAKSSELLEKKK). Residues 46 to 68 (LAAGSTLFHWGLLCVVGGHVMGI) form a helical membrane-spanning segment. Heme b contacts are provided by H54 and H64. Residues 69–81 (LIPEGVYASLGIS) lie on the Extracellular side of the membrane. A helical transmembrane segment spans residues 82-111 (EHMYHKMAIGAGLPAGIAACTGLVILTYRR). The Cytoplasmic segment spans residues 112–123 (LFDKRIRKTSSP). The helical transmembrane segment at 124–147 (SDILTLLLLLFMMLSGVAATFLNI) threads the bilayer. The Extracellular portion of the chain corresponds to 148 to 180 (DSKGFDYRTTVGPWFREIVLFRPDASLMESVPL). Residues 181-196 (WFKFHIVIGYVVFILW) traverse the membrane as a helical segment. The heme b site is built by H185 and H203. Residues 197–223 (PFTRLVHVFSLPLKYLTRSYVVYRKRS) are Cytoplasmic-facing.

Heme serves as cofactor.

Its subcellular location is the cell membrane. The catalysed reaction is nitrate + a quinol = a quinone + nitrite + H2O. Its function is as follows. The gamma chain is a membrane-embedded heme-iron unit resembling cytochrome b, which transfers electrons from quinones to the beta subunit. The chain is Nitrate reductase gamma chain (narI) from Bacillus subtilis (strain 168).